A 410-amino-acid chain; its full sequence is D-3-phosphoglycerate dehydrogenase (410 aa).

NAD(+)-binding positions include 162–163 (HI), Asp182, 239–241 (AAR), and Asp265. Arg241 is a catalytic residue. Glu270 is an active-site residue. The active-site Proton donor is the His293. Residue 293–296 (HIGG) coordinates NAD(+). Residues 341 to 410 (RLLHIHENRP…DGTIRARVLY (70 aa)) form the ACT domain.

It belongs to the D-isomer specific 2-hydroxyacid dehydrogenase family.

The enzyme catalyses (2R)-3-phosphoglycerate + NAD(+) = 3-phosphooxypyruvate + NADH + H(+). The catalysed reaction is (R)-2-hydroxyglutarate + NAD(+) = 2-oxoglutarate + NADH + H(+). It functions in the pathway amino-acid biosynthesis; L-serine biosynthesis; L-serine from 3-phospho-D-glycerate: step 1/3. With respect to regulation, in bacteria displays feedback inhibition by L-serine. In terms of biological role, catalyzes the reversible oxidation of 3-phospho-D-glycerate to 3-phosphonooxypyruvate, the first step of the phosphorylated L-serine biosynthesis pathway. Also catalyzes the reversible oxidation of 2-hydroxyglutarate to 2-oxoglutarate. This Haemophilus influenzae (strain ATCC 51907 / DSM 11121 / KW20 / Rd) protein is D-3-phosphoglycerate dehydrogenase (serA).